A 323-amino-acid polypeptide reads, in one-letter code: tRNA dimethylallyltransferase (323 aa).

18-25 (GPTASGKS) provides a ligand contact to ATP. 20–25 (TASGKS) serves as a coordination point for substrate. Interaction with substrate tRNA regions lie at residues 43 to 46 (DSAQ), 167 to 171 (QRIQR), and 249 to 254 (RCVGYR).

Belongs to the IPP transferase family. Monomer. Mg(2+) is required as a cofactor.

The catalysed reaction is adenosine(37) in tRNA + dimethylallyl diphosphate = N(6)-dimethylallyladenosine(37) in tRNA + diphosphate. Catalyzes the transfer of a dimethylallyl group onto the adenine at position 37 in tRNAs that read codons beginning with uridine, leading to the formation of N6-(dimethylallyl)adenosine (i(6)A). This Nitrosospira multiformis (strain ATCC 25196 / NCIMB 11849 / C 71) protein is tRNA dimethylallyltransferase.